We begin with the raw amino-acid sequence, 305 residues long: N-acetylglucosamine-1-phosphotransferase subunit gamma (305 aa).

A signal peptide spans 1–24 (MAAGLARLLLLLGLSAGGPAPAGA). Residues 69-171 (GKCFSLVEST…TFETPLVCHP (103 aa)) enclose the MRH domain. C71 and C84 are oxidised to a cystine. 2 N-linked (GlcNAc...) asparagine glycosylation sites follow: N88 and N115. Intrachain disulfides connect C129–C157 and C142–C169. The DMAP1-binding domain maps to 176 to 279 (VYPTLPEALQ…YTRPTETSNL (104 aa)). The segment at 267–305 (GIPYTRPTETSNLEHLGHETPRAKSPEQLRGDPGLRGSL) is disordered. Basic and acidic residues predominate over residues 281-296 (HLGHETPRAKSPEQLR).

In terms of assembly, homodimer; disulfide-linked. Hexamer of two alpha (GNPTAB), two beta (GNPTAB) and two gamma (GNPTG) subunits; disulfide-linked. The alpha and/or the beta subunits of the enzyme constitute the catalytic subunits. Cys-245 mediates the formation of the interchain disulfide bond for formation of the homodimer. Cys-142, Cys-157 and Cys-169 are involved in intramolecular disulfide bonds formation. As to expression, widely expressed.

The protein resides in the secreted. The protein localises to the golgi apparatus. Functionally, non-catalytic subunit of the N-acetylglucosamine-1-phosphotransferase complex, an enzyme that catalyzes the formation of mannose 6-phosphate (M6P) markers on high mannose type oligosaccharides in the Golgi apparatus. Binds and presents the high mannose glycans of the acceptor to the catalytic alpha and beta subunits (GNPTAB). Enhances the rate of N-acetylglucosamine-1-phosphate transfer to the oligosaccharides of acid hydrolase acceptors. This is N-acetylglucosamine-1-phosphotransferase subunit gamma (GNPTG) from Homo sapiens (Human).